The following is a 133-amino-acid chain: Small ribosomal subunit protein uS8 (133 aa).

Belongs to the universal ribosomal protein uS8 family. In terms of assembly, part of the 30S ribosomal subunit. Contacts proteins S5 and S12.

Its function is as follows. One of the primary rRNA binding proteins, it binds directly to 16S rRNA central domain where it helps coordinate assembly of the platform of the 30S subunit. The sequence is that of Small ribosomal subunit protein uS8 from Prochlorococcus marinus (strain MIT 9312).